The primary structure comprises 362 residues: Glutaminyl-peptide cyclotransferase (362 aa).

A signal peptide spans 1-35; it reads MAGSEDKRVVGTLHLLLLQATVLSLTAGNLSLVSA. N-linked (GlcNAc...) asparagine glycosylation is found at Asn29 and Asn50. Residues Cys140 and Cys165 are joined by a disulfide bond. Asp160 is a Zn(2+) binding site. Glu202 serves as the catalytic Proton acceptor. Residue Glu203 participates in Zn(2+) binding. Asp249 serves as the catalytic Proton acceptor. His331 serves as a coordination point for Zn(2+).

Belongs to the glutaminyl-peptide cyclotransferase family.

The protein resides in the secreted. The catalysed reaction is N-terminal L-glutaminyl-[peptide] = N-terminal 5-oxo-L-prolyl-[peptide] + NH4(+). Its function is as follows. Responsible for the biosynthesis of pyroglutamyl peptides. Has a bias against acidic and tryptophan residues adjacent to the N-terminal glutaminyl residue and a lack of importance of chain length after the second residue. The protein is Glutaminyl-peptide cyclotransferase (Qpct) of Mus musculus (Mouse).